The primary structure comprises 615 residues: Elongation factor 4 (615 aa).

The tr-type G domain maps to glutamine 14 to threonine 200. Residues aspartate 26–threonine 31 and asparagine 147–aspartate 150 contribute to the GTP site.

It belongs to the TRAFAC class translation factor GTPase superfamily. Classic translation factor GTPase family. LepA subfamily.

The protein resides in the cell membrane. It catalyses the reaction GTP + H2O = GDP + phosphate + H(+). Its function is as follows. Required for accurate and efficient protein synthesis under certain stress conditions. May act as a fidelity factor of the translation reaction, by catalyzing a one-codon backward translocation of tRNAs on improperly translocated ribosomes. Back-translocation proceeds from a post-translocation (POST) complex to a pre-translocation (PRE) complex, thus giving elongation factor G a second chance to translocate the tRNAs correctly. Binds to ribosomes in a GTP-dependent manner. This is Elongation factor 4 from Corynebacterium diphtheriae (strain ATCC 700971 / NCTC 13129 / Biotype gravis).